The chain runs to 387 residues: MACAGPASGRHGVSMQEHMAIDVSPGPIRPIRLISNYFPHFYPFLEPVLRAPDRQAMLAPAIPSAPQLQPNPEPEGDSDDSTALGTLEFTLLFDEDNSALHCTAHRAKGLKPPAAGSVDTYVKANLLPGASKASQLRTRTVRGTREPVWEETLTYHGFTCQDAGRKTLRLCVCEDSRLRRRRRGPPLGELRVPLRKLVPNRARSFDICLEKRKLTKRPKSLDTARGMSLYEEEEVEAEVFGEERGRILLSLCYSSERGGLLVGVLRCVHLAPMDANGYSDPFVRLFLHPSSGKKSKYKTSVRRKTLNPEFNEEFFYAGHREELAQKALLVSVWDYDLGTADDFIGGVQLSGRASGERLRHWRECLGHCDHRLELWHLLDSVPPQLGD.

C2 domains are found at residues 83 to 209 (ALGT…DICL) and 243 to 376 (ERGR…ELWH). Ca(2+) contacts are provided by Asp274, Asp280, Asp334, Asp336, and Asp342.

It depends on Ca(2+) as a cofactor.

In terms of biological role, may be involved in regulation of vesicular trafficking. In vitro, does not bind calcium and phospholipids. The protein is Double C2-like domain-containing protein gamma (Doc2g) of Mus musculus (Mouse).